The primary structure comprises 608 residues: Microtubule-associated protein 70-3 (608 aa).

The disordered stretch occupies residues 1-23 (MADGVEEGNAVAPRGPARRRGTV). Residues 40–346 (DPVRVELTRL…ARSEAQLKEK (307 aa)) adopt a coiled-coil conformation. The segment at 224–458 (ILDKLQRQKV…HLLNRSTDAV (235 aa)) is required for targeting to microtubules. 2 disordered regions span residues 354–493 (LEDG…TANN) and 570–608 (DKEQ…RNYQ). Residues 363-379 (SGSSRLPTEGKSFSNGP) show a composition bias toward polar residues. Positions 402–421 (RRSPSFHSRSSLSSSSSLVL) are enriched in low complexity. Over residues 476–493 (IENTNSNTDESNKETANN) the composition is skewed to polar residues. A coiled-coil region spans residues 542–576 (LTKAMEVEAKKMRREVAAMEKEVAAMRVDKEQEVK). Low complexity predominate over residues 586 to 608 (TGSSQVLSGSRSSSRSGLTRNYQ).

Belongs to the MAP70 family.

It is found in the cytoplasm. The protein resides in the cytoskeleton. Plant-specific protein that interact with microtubules. The protein is Microtubule-associated protein 70-3 (MAP70.3) of Oryza sativa subsp. japonica (Rice).